The sequence spans 312 residues: Zinc finger protein 414 (312 aa).

The disordered stretch occupies residues 1-110; that stretch reads MEEKPSGPIP…RRPPPGKQIP (110 aa). Residues 29–48 are compositionally biased toward low complexity; sequence SPAVPAAAPSSSMSEEPGPE. A compositionally biased stretch (polar residues) spans 84–93; it reads GLTSIVSGTS. 3 consecutive C2H2-type zinc fingers follow at residues 109–133, 145–169, and 176–201; these read IPCS…LRTH, FRCS…SKLH, and FKCE…CAEH. Residues 203–312 are disordered; the sequence is QSPAPPPPPA…GSDAPSGACR (110 aa). Over residues 213–225 the composition is skewed to basic and acidic residues; sequence LDREPPAPERPPE. Low complexity-rich tracts occupy residues 227–243 and 265–285; these read DPAS…EPFT and SPPR…SSAA.

It belongs to the krueppel C2H2-type zinc-finger protein family.

The protein resides in the nucleus. Its function is as follows. May be involved in transcriptional regulation. The sequence is that of Zinc finger protein 414 (ZNF414) from Homo sapiens (Human).